Consider the following 515-residue polypeptide: Protein disulfide-isomerase (515 aa).

The N-terminal stretch at 1–20 (MRSFAPWLVSLLGASAVVAA) is a signal peptide. Thioredoxin domains are found at residues 21–132 (ADTE…QSLP) and 339–470 (VLDG…ENGK). Residues cysteine 54, cysteine 57, cysteine 389, and cysteine 392 each act as nucleophile in the active site. 2 disulfide bridges follow: cysteine 54–cysteine 57 and cysteine 389–cysteine 392. The tract at residues 478–515 (VASEETQEGGDVTEAAPSATEAETPAATDDEKAEHDEL) is disordered. The span at 490–504 (TEAAPSATEAETPAA) shows a compositional bias: low complexity. Basic and acidic residues predominate over residues 506 to 515 (DDEKAEHDEL). The Prevents secretion from ER motif lies at 512-515 (HDEL).

Belongs to the protein disulfide isomerase family.

Its subcellular location is the endoplasmic reticulum lumen. It carries out the reaction Catalyzes the rearrangement of -S-S- bonds in proteins.. In terms of biological role, participates in the folding of proteins containing disulfide bonds, may be involved in glycosylation, prolyl hydroxylation and triglyceride transfer. In Aspergillus niger, this protein is Protein disulfide-isomerase (pdiA).